A 192-amino-acid polypeptide reads, in one-letter code: Adenylate kinase (192 aa).

10–18 contributes to the ATP binding site; it reads GVPGVGGTT.

The protein belongs to the archaeal adenylate kinase family. In terms of assembly, monomer.

It is found in the cytoplasm. It catalyses the reaction AMP + ATP = 2 ADP. The sequence is that of Adenylate kinase from Methanococcus maripaludis (strain C6 / ATCC BAA-1332).